The following is a 144-amino-acid chain: Transcriptional regulator MraZ (144 aa).

SpoVT-AbrB domains are found at residues 5-47 (TYTP…PRAE) and 77-120 (TDEQ…DAQA).

It belongs to the MraZ family. Forms oligomers.

It is found in the cytoplasm. Its subcellular location is the nucleoid. In Mycolicibacterium gilvum (strain PYR-GCK) (Mycobacterium gilvum (strain PYR-GCK)), this protein is Transcriptional regulator MraZ.